The following is a 311-amino-acid chain: Homeobox-leucine zipper protein HOX1 (311 aa).

2 disordered regions span residues 29-69 (AGGA…SDHR) and 97-160 (AETT…KKLR). Positions 119-145 (SSPNSTLSSLSGKRGAPSAATAAAAAA) are enriched in low complexity. Residues 154 to 213 (GSRKKLRLSKDQAAVLEDTFKEHNTLNPKQKAALARQLNLKPRQVEVWFQNRRARTKLKQ) constitute a DNA-binding region (homeobox). Positions 212-256 (KQTEVDCELLKRCCETLTDENRRLHRELQELRALKLATAAAAPHH) are leucine-zipper. The segment at 279-311 (SAATTTRNNSGAAPARPVPTRPWPPAAAQRSSA) is disordered. Positions 280–289 (AATTTRNNSG) are enriched in polar residues. The span at 294-303 (RPVPTRPWPP) shows a compositional bias: pro residues.

It belongs to the HD-ZIP homeobox family. Class II subfamily. Homodimer. May form a heterodimer with HOX2, HOX3 or HOX7. Expressed in root provascular and vascular cylinder, provascular and vascular strands of leaves, provascular and vascular strands of the whole panicle, in mature embryo provascular bundles of scutellum and embryonic axis and provascular and vascular strands of young immature spikelet organs. Expressed in differentiating and differentiated xylem and phloem elements, and in outer and inner bundle sheath cells of all vascular bundles. Expressed in auricles, ligules, culm, guard cells brac hairs and pollen.

The protein resides in the nucleus. Functionally, probable transcription repressor involved leaf development. Binds to the DNA sequence 5'-CAAT[GC]ATTG-3'. May act as a regulatory switch to specify provascular cell fate. This is Homeobox-leucine zipper protein HOX1 (HOX1) from Oryza sativa subsp. japonica (Rice).